Here is a 469-residue protein sequence, read N- to C-terminus: Trigger factor (469 aa).

In terms of domain architecture, PPIase FKBP-type spans 162-243; that stretch reads GDFVSIDLSA…VKSVKERELP (82 aa). The segment at 429–469 is disordered; the sequence is NTIDTSEFFGKHAQSDKADQKTEEADPNSDAIDEEVDEAAE. Over residues 437–452 the composition is skewed to basic and acidic residues; that stretch reads FGKHAQSDKADQKTEE. Over residues 453 to 469 the composition is skewed to acidic residues; it reads ADPNSDAIDEEVDEAAE.

The protein belongs to the FKBP-type PPIase family. Tig subfamily.

Its subcellular location is the cytoplasm. The catalysed reaction is [protein]-peptidylproline (omega=180) = [protein]-peptidylproline (omega=0). Involved in protein export. Acts as a chaperone by maintaining the newly synthesized protein in an open conformation. Functions as a peptidyl-prolyl cis-trans isomerase. In Mycobacterium leprae (strain Br4923), this protein is Trigger factor.